The sequence spans 252 residues: Hydroxyacylglutathione hydrolase (252 aa).

Zn(2+)-binding residues include His54, His56, Asp58, His59, His113, Asp132, and His170.

Belongs to the metallo-beta-lactamase superfamily. Glyoxalase II family. As to quaternary structure, monomer. Requires Zn(2+) as cofactor.

The enzyme catalyses an S-(2-hydroxyacyl)glutathione + H2O = a 2-hydroxy carboxylate + glutathione + H(+). The protein operates within secondary metabolite metabolism; methylglyoxal degradation; (R)-lactate from methylglyoxal: step 2/2. In terms of biological role, thiolesterase that catalyzes the hydrolysis of S-D-lactoyl-glutathione to form glutathione and D-lactic acid. This is Hydroxyacylglutathione hydrolase from Synechococcus sp. (strain JA-3-3Ab) (Cyanobacteria bacterium Yellowstone A-Prime).